A 199-amino-acid polypeptide reads, in one-letter code: Recombination protein RecR (199 aa).

Residues 57 to 72 (CRQCRVLTEEPVCGLC) form a C4-type zinc finger. Residues 80–175 (SLLCVVEGPA…RTTRIAHGVP (96 aa)) form the Toprim domain.

It belongs to the RecR family.

May play a role in DNA repair. It seems to be involved in an RecBC-independent recombinational process of DNA repair. It may act with RecF and RecO. The chain is Recombination protein RecR from Alkalilimnicola ehrlichii (strain ATCC BAA-1101 / DSM 17681 / MLHE-1).